The chain runs to 345 residues: Probable glucan endo-1,3-beta-glucosidase BG4 (345 aa).

The signal sequence occupies residues 1-22; that stretch reads MLYSPKKLFLFFLSCIVLYVNS. Asn-23 and Asn-119 each carry an N-linked (GlcNAc...) asparagine glycan. The active-site Proton donor is Glu-128. Glu-267 (nucleophile) is an active-site residue. 2 N-linked (GlcNAc...) asparagine glycosylation sites follow: Asn-277 and Asn-306.

It belongs to the glycosyl hydrolase 17 family.

The protein resides in the secreted. It carries out the reaction Hydrolysis of (1-&gt;3)-beta-D-glucosidic linkages in (1-&gt;3)-beta-D-glucans.. In terms of biological role, may play a role in plant defense against pathogens. This Arabidopsis thaliana (Mouse-ear cress) protein is Probable glucan endo-1,3-beta-glucosidase BG4.